The following is a 362-amino-acid chain: Heat-inducible transcription repressor HrcA (362 aa).

It belongs to the HrcA family.

Negative regulator of class I heat shock genes (grpE-dnaK-dnaJ and groELS operons). Prevents heat-shock induction of these operons. The sequence is that of Heat-inducible transcription repressor HrcA from Rhizobium etli (strain CIAT 652).